We begin with the raw amino-acid sequence, 45 residues long: Large ribosomal subunit protein bL34 (45 aa).

Positions 1–20 (MSKRTYQPNKRKRLKTHGFR) are enriched in basic residues. The disordered stretch occupies residues 1–45 (MSKRTYQPNKRKRLKTHGFRSRMSTASGRRIISCRRRKNRETLTA).

It belongs to the bacterial ribosomal protein bL34 family.

The sequence is that of Large ribosomal subunit protein bL34 from Tropheryma whipplei (strain Twist) (Whipple's bacillus).